Here is a 174-residue protein sequence, read N- to C-terminus: MLRLGHRPQRDKRVTTHVALVARAFGAKGIYIHGNDQKLAKKIEDVINVWGGKYFRIEMISNPKKLVNDWKATGGKVVHLTMYGINLPHVQEKLKELDKILVIVGAEKVEGWYYHMADFNVAISNQPHSEVASLALFLDRVYKGEELNIMFGDSKISVIPMERGKKVVRNDGQH.

Residues Leu-80, Gly-105 to Val-109, and Ile-123 to Glu-130 contribute to the S-adenosyl-L-methionine site.

The protein belongs to the aTrm56 family. Homodimer.

The protein localises to the cytoplasm. It carries out the reaction cytidine(56) in tRNA + S-adenosyl-L-methionine = 2'-O-methylcytidine(56) in tRNA + S-adenosyl-L-homocysteine + H(+). Functionally, specifically catalyzes the AdoMet-dependent 2'-O-ribose methylation of cytidine at position 56 in tRNAs. The sequence is that of tRNA (cytidine(56)-2'-O)-methyltransferase from Metallosphaera sedula (strain ATCC 51363 / DSM 5348 / JCM 9185 / NBRC 15509 / TH2).